We begin with the raw amino-acid sequence, 763 residues long: Phosphoglycerol transferase I (763 aa).

The next 4 membrane-spanning stretches (helical) occupy residues 1–21 (MSELLSFALFLASVLIYAWKA), 26–46 (WWFAATLTVLGLFVVLNITLF), 77–97 (ILPGIGIVLGLAAVFGALGWI), and 108–128 (FGYSLLALLLALGSVDASPAF).

It belongs to the OpgB family.

It is found in the cell inner membrane. The enzyme catalyses a phosphatidylglycerol + a membrane-derived-oligosaccharide D-glucose = a 1,2-diacyl-sn-glycerol + a membrane-derived-oligosaccharide 6-(glycerophospho)-D-glucose.. It functions in the pathway glycan metabolism; osmoregulated periplasmic glucan (OPG) biosynthesis. Transfers a phosphoglycerol residue from phosphatidylglycerol to the membrane-bound nascent glucan backbones. This Escherichia coli O7:K1 (strain IAI39 / ExPEC) protein is Phosphoglycerol transferase I.